The primary structure comprises 356 residues: sn-glycerol-3-phosphate import ATP-binding protein UgpC (356 aa).

The ABC transporter domain occupies 4-235; the sequence is LKLQAVTKSW…PASLFVASFI (232 aa). Residue 37–44 participates in ATP binding; sequence GPSGCGKS.

It belongs to the ABC transporter superfamily. sn-glycerol-3-phosphate importer (TC 3.A.1.1.3) family. The complex is composed of two ATP-binding proteins (UgpC), two transmembrane proteins (UgpA and UgpE) and a solute-binding protein (UgpB).

It is found in the cell inner membrane. It carries out the reaction sn-glycerol 3-phosphate(out) + ATP + H2O = sn-glycerol 3-phosphate(in) + ADP + phosphate + H(+). Its function is as follows. Part of the ABC transporter complex UgpBAEC involved in sn-glycerol-3-phosphate (G3P) import. Responsible for energy coupling to the transport system. This Shigella sonnei (strain Ss046) protein is sn-glycerol-3-phosphate import ATP-binding protein UgpC.